A 314-amino-acid chain; its full sequence is BRCA2 and CDKN1A-interacting protein (314 aa).

Residues 1-56 (MASRSKRRAVESGVPQPPDPPVQRDEEEEKEVENEDEDDDDSDKEKDEEDEVIDEE) form a disordered region. Residues 25–56 (DEEEEKEVENEDEDDDDSDKEKDEEDEVIDEE) are compositionally biased toward acidic residues. Phosphoserine is present on residues Ser-42 and Ser-112. The interaction with BRCA2 stretch occupies residues 59 to 167 (IEFEAYSLSD…EKSMVEQLDK (109 aa)). The interaction with CDKN1A stretch occupies residues 161–259 (MVEQLDKFLN…NAEEEFFYEK (99 aa)). Position 281 is a phosphoserine (Ser-281).

Belongs to the BCP1 family. As to quaternary structure, interacts with BRCA2, CDKN1A and MTDH/LYRIC. Isoform 2/alpha, but not isoform 1/beta, interacts with DCTN1/p150-glued and ACTR1A/ARP1. Both isoform 1 and isoform 2 interact with alpha-, beta- and gamma-tubulins. Interacts with TENT5C; the interaction has no effect on TENT5C poly(A) polymerase function. In terms of tissue distribution, expressed at high levels in testis and skeletal muscle and at lower levels in brain, heart, kidney, liver, lung, ovary, pancreas, placenta, and spleen.

It localises to the nucleus. The protein localises to the cytoplasm. Its subcellular location is the cytoskeleton. The protein resides in the microtubule organizing center. It is found in the centrosome. It localises to the centriole. The protein localises to the spindle pole. In terms of biological role, during interphase, required for microtubule organizing and anchoring activities. During mitosis, required for the organization and stabilization of the spindle pole. Isoform 2/alpha is particularly important for the regulation of microtubule anchoring, microtubule stability, spindle architecture and spindle orientation, compared to isoform 1/beta. May promote cell cycle arrest by enhancing the inhibition of CDK2 activity by CDKN1A. May be required for repair of DNA damage by homologous recombination in conjunction with BRCA2. May not be involved in non-homologous end joining (NHEJ). The polypeptide is BRCA2 and CDKN1A-interacting protein (BCCIP) (Homo sapiens (Human)).